The following is a 340-amino-acid chain: MKVSIVGITGYSGLELVKILNNHKKVELVSIHATKEVGRRLSDVYPYLAGVCDLKIEDFDAQEIIEKADLVFFATPSGVASSLAEEFVQADFPIIDLSGDHRLPADVYQEWYKKSPAKKMILNKFTYALSEYTDVKGKKFIANPGCYATATELALIPLVAAGLIETDSIIVDAKSGLTGAGKALSESSHFVNVHDNYMTYKLNHHQHIPEIVQTLQAFDADMPEIQFSTSLLPVNRGIMATVYCKLKKDVAVSDIASAFAKAYDDKPFVRVQENLPELHNVIGSNFTDIGFAYNEKTNVMTVISVIDNLLKGASGQAVQNLNLMQGWDETEGLHMTPSYL.

Cys-146 is an active-site residue.

It belongs to the NAGSA dehydrogenase family. Type 1 subfamily.

The protein resides in the cytoplasm. The enzyme catalyses N-acetyl-L-glutamate 5-semialdehyde + phosphate + NADP(+) = N-acetyl-L-glutamyl 5-phosphate + NADPH + H(+). It participates in amino-acid biosynthesis; L-arginine biosynthesis; N(2)-acetyl-L-ornithine from L-glutamate: step 3/4. Catalyzes the NADPH-dependent reduction of N-acetyl-5-glutamyl phosphate to yield N-acetyl-L-glutamate 5-semialdehyde. This Streptococcus thermophilus (strain CNRZ 1066) protein is N-acetyl-gamma-glutamyl-phosphate reductase.